We begin with the raw amino-acid sequence, 283 residues long: GTP cyclohydrolase MptA (283 aa).

It belongs to the GTP cyclohydrolase IV family. In terms of assembly, homodimer. Fe(2+) serves as cofactor.

It carries out the reaction GTP + H2O = 7,8-dihydroneopterin 2',3'-cyclic phosphate + formate + diphosphate + H(+). It participates in cofactor biosynthesis; 5,6,7,8-tetrahydromethanopterin biosynthesis. Functionally, converts GTP to 7,8-dihydro-D-neopterin 2',3'-cyclic phosphate, the first intermediate in the biosynthesis of coenzyme methanopterin. The sequence is that of GTP cyclohydrolase MptA from Aeropyrum pernix (strain ATCC 700893 / DSM 11879 / JCM 9820 / NBRC 100138 / K1).